Here is a 354-residue protein sequence, read N- to C-terminus: Holliday junction branch migration complex subunit RuvB (354 aa).

Positions 4–190 (TDKLAAERII…FGIVARLEFY (187 aa)) are large ATPase domain (RuvB-L). ATP-binding positions include L29, R30, G71, K74, T75, T76, 137 to 139 (EDY), R180, Y190, and R227. T75 serves as a coordination point for Mg(2+). Positions 191-261 (DADQLARIVR…VADAALAMLD (71 aa)) are small ATPAse domain (RuvB-S). Positions 264-354 (PVGFDLMDRK…RGMWDTPAGK (91 aa)) are head domain (RuvB-H). DNA-binding residues include R300, R319, and R324.

This sequence belongs to the RuvB family. In terms of assembly, homohexamer. Forms an RuvA(8)-RuvB(12)-Holliday junction (HJ) complex. HJ DNA is sandwiched between 2 RuvA tetramers; dsDNA enters through RuvA and exits via RuvB. An RuvB hexamer assembles on each DNA strand where it exits the tetramer. Each RuvB hexamer is contacted by two RuvA subunits (via domain III) on 2 adjacent RuvB subunits; this complex drives branch migration. In the full resolvosome a probable DNA-RuvA(4)-RuvB(12)-RuvC(2) complex forms which resolves the HJ.

The protein resides in the cytoplasm. It catalyses the reaction ATP + H2O = ADP + phosphate + H(+). Functionally, the RuvA-RuvB-RuvC complex processes Holliday junction (HJ) DNA during genetic recombination and DNA repair, while the RuvA-RuvB complex plays an important role in the rescue of blocked DNA replication forks via replication fork reversal (RFR). RuvA specifically binds to HJ cruciform DNA, conferring on it an open structure. The RuvB hexamer acts as an ATP-dependent pump, pulling dsDNA into and through the RuvAB complex. RuvB forms 2 homohexamers on either side of HJ DNA bound by 1 or 2 RuvA tetramers; 4 subunits per hexamer contact DNA at a time. Coordinated motions by a converter formed by DNA-disengaged RuvB subunits stimulates ATP hydrolysis and nucleotide exchange. Immobilization of the converter enables RuvB to convert the ATP-contained energy into a lever motion, pulling 2 nucleotides of DNA out of the RuvA tetramer per ATP hydrolyzed, thus driving DNA branch migration. The RuvB motors rotate together with the DNA substrate, which together with the progressing nucleotide cycle form the mechanistic basis for DNA recombination by continuous HJ branch migration. Branch migration allows RuvC to scan DNA until it finds its consensus sequence, where it cleaves and resolves cruciform DNA. The polypeptide is Holliday junction branch migration complex subunit RuvB (Burkholderia ambifaria (strain MC40-6)).